The sequence spans 586 residues: Lipoprotein LpqB (586 aa).

Positions 1 to 17 (MVRSVFALVFAAVLLGG) are cleaved as a signal peptide. A lipid anchor (N-palmitoyl cysteine) is attached at cysteine 18. A lipid anchor (S-diacylglycerol cysteine) is attached at cysteine 18. The disordered stretch occupies residues 26-45 (APQAIGTVERPAPSNLPKPI).

The protein belongs to the LpqB lipoprotein family.

Its subcellular location is the cell membrane. The polypeptide is Lipoprotein LpqB (Mycobacterium ulcerans (strain Agy99)).